A 1574-amino-acid polypeptide reads, in one-letter code: MAFSKGFRIYHKLDPPPFSLIVETRHKEECLMFESGAVAVLSSAEKEAIKGTYAKVLDAYGLLGVLRLNLGDTMLHYLVLVTGCMSVGKIQESEVFRVTSTEFISLRVDASDEDRISEVRKVLNSGNFYFAWSASGVSLDLSLNAHRSMQEHTTDNRFFWNQSLHLHLKHYGVNCDDWLLRLMCGGVEIRTIYAAHKQAKACLISRLSCERAGTRFNVRGTNDDGHVANFVETEQVIYLDDCVSSFIQIRGSVPLFWEQPGLQVGSHRVRMSRGFEANAPAFDRHFRTLKDLYGKQIVVNLLGSKEGEHMLSKAFQSHLKASEHASDIHMVSFDYHQMVKGGKAEKLHSILKPQVQKFLDYGFFYFDGSEVQRCQSGTVRTNCLDCLDRTNSVQAFLGLEMLAKQLEALGLAEKPQLVTRFQEVFRSMWSVNGDSISKIYAGTGALEGKAKLKDGARSVTRTIQNNFFDSSKQEAIDVLLLGNTLNSDLADKARALLTTGSLRVSEQTLQSASSKVLKNMCENFYKYSKPKKIRVCVGTWNVNGGKQFRSIAFKNQTLTDWLLDAPKLAGIQEFQDKRSKPTDIFAIGFEEMVELNAGNIVNASTTNQKLWAVELQKTISRDNKYVLLASEQLVGVCLFVFIRPQHAPFIRDVAVDTVKTGMGGATGNKGAVAIRMLFHTTSLCFVCSHFAAGQSQVKERNEDFVEIARKLSFPMGRMLFSHDYVFWCGDFNYRIDLPNEEVKELIRQQNWDSLIAGDQLINQKNAGQIFRGFLEGKVTFAPTYKYDLFSEDYDTSEKCRTPAWTDRVLWRRRKWPFDRSAEDLDLLNASFQDESKILYTWTPGTLLHYGRAELKTSDHRPVVALIDIDIFEVEAEERQKIYKEVIAVQGPPDGTVLVSIKSSAQESTFFDDALIDELLRQFAHFGEVILIRFVEDKMWVTFLEGSSALNALSLNGKELLNRTITITLKSPDWIKHLEEEMSLEKISVTLPSSASSTLLGEDAEVAADFDMEGDVDDYSAEVEELLPQHLQPSSSSGLGTSPSSSPRTSPCQSPTVPEYSAPSLPIRPSRAPSRTPGPPSSQGSPVDTQPAAQKDSSQTLEPKRPPPPRPVAPPARPAPPQRPPPPSGARSPAPARKEFGGVGAPPSPGVARREIEAPKSPGTARKDNIGRNQPSPQAGLAGPGPAGYGAARPTIPARAGVISAPQSQARVCAGRPTPDSQSKPSETLKGPAVLPEPLKPQAAFPQQPSLPTPAQKLQDPLVPIAAPTMPPSGPQPNLETPPQPPPRSRSSQSLPSDSSPQLQQEQPTGQVKINGISGVKQEPTLKSDPFEDLSLSVLAVSKAQPSVQISPVLTPDPKMLIQLPSASQSQVNPLSSVSCMPTRPPGPEESKSQESMGSSANPFPSLPCRNPFTDRTAAPGNPFRVQSQESEATSWLSKEEPVPNSPFPPLMPLSHDTSKASSSLGGFEDNFDLQSQSTVKTSNPKGWVTFDEDDNFPTTGKSKSVCPDLVGNAPASFDDDWSKGASVSFCVLPARRPPPPPPPVPLLPPGTTSSAGPSTTLPSKAPSTLDFTER.

The 324-residue stretch at 119-442 folds into the SAC domain; that stretch reads VRKVLNSGNF…GDSISKIYAG (324 aa). Phosphoserine occurs at positions 820 and 830. Residues 894–971 enclose the RRM domain; sequence GTVLVSIKSS…RTITITLKSP (78 aa). Residues 1029–1054 show a composition bias toward low complexity; that stretch reads HLQPSSSSGLGTSPSSSPRTSPCQSP. The disordered stretch occupies residues 1029–1327; it reads HLQPSSSSGL…GVKQEPTLKS (299 aa). Serine 1053 carries the post-translational modification Phosphoserine. A compositionally biased stretch (polar residues) spans 1080 to 1100; sequence SSQGSPVDTQPAAQKDSSQTL. A compositionally biased stretch (pro residues) spans 1105 to 1127; that stretch reads PPPPRPVAPPARPAPPQRPPPPS. Residues serine 1147 and serine 1175 each carry the phosphoserine modification. Residue arginine 1198 is modified to Omega-N-methylarginine. Threonine 1217 is subject to Phosphothreonine. Positions 1268-1287 are enriched in pro residues; the sequence is TMPPSGPQPNLETPPQPPPR. The segment covering 1288–1307 has biased composition (low complexity); that stretch reads SRSSQSLPSDSSPQLQQEQP. 2 positions are modified to phosphoserine: serine 1290 and serine 1350. Threonine 1354 bears the Phosphothreonine mark. 2 disordered regions span residues 1363–1507 and 1532–1574; these read LPSA…SVCP and LPAR…FTER. Polar residues-rich tracts occupy residues 1364-1379, 1393-1402, 1424-1436, and 1472-1484; these read PSAS…SVSC, QESMGSSANP, RVQS…TSWL, and DLQS…TSNP. The 3 X 3 AA repeats of N-P-F stretch occupies residues 1403-1425; that stretch reads FPSLPCRNPFTDRTAAPGNPFRV. Residues 1535–1548 are compositionally biased toward pro residues; that stretch reads RRPPPPPPPVPLLP. A compositionally biased stretch (low complexity) spans 1549-1563; sequence PGTTSSAGPSTTLPS. Positions 1565–1574 are enriched in polar residues; it reads APSTLDFTER.

Belongs to the synaptojanin family. The protein in the central section; belongs to the inositol 1,4,5-trisphosphate 5-phosphatase family. Interacts with ASH/GRB2. Interacts with PACSIN1, PACSIN2 and PACSIN3. Interacts with AMPH, SH3GL1, SH3GL2 and SH3GL3. Interacts with MYO1E (via SH3 domain). Interacts with BIN1 and DNM1. Interacts with EPS15.

It is found in the cytoplasm. The protein resides in the perinuclear region. It carries out the reaction a 1,2-diacyl-sn-glycero-3-phospho-(1D-myo-inositol-4,5-bisphosphate) + H2O = a 1,2-diacyl-sn-glycero-3-phospho-(1D-myo-inositol 4-phosphate) + phosphate. Phosphatase that acts on various phosphoinositides, including phosphatidylinositol 4-phosphate, phosphatidylinositol (4,5)-bisphosphate and phosphatidylinositol (3,4,5)-trisphosphate. Has a role in clathrin-mediated endocytosis. Hydrolyzes PIP2 bound to actin regulatory proteins resulting in the rearrangement of actin filaments downstream of tyrosine kinase and ASH/GRB2. The polypeptide is Synaptojanin-1 (Synj1) (Mus musculus (Mouse)).